Here is a 523-residue protein sequence, read N- to C-terminus: NAD(P)H-quinone oxidoreductase subunit 2 (523 aa).

Transmembrane regions (helical) follow at residues 30 to 50 (VGPE…DLAG), 57 to 77 (WVPP…ALQW), 94 to 114 (LAIA…LISW), 128 to 148 (AAIL…TDLV), 182 to 202 (LLVG…LYGL), 223 to 243 (AALA…AVPF), 255 to 275 (PTPV…ALAL), 291 to 311 (LLFT…ALAQ), 317 to 337 (MLAY…VCGT), 345 to 365 (VLYM…IILF), 389 to 409 (LGLS…GFFG), 424 to 444 (VLVV…IGVI), and 477 to 497 (VALV…NPLF).

This sequence belongs to the complex I subunit 2 family. As to quaternary structure, NDH-1 can be composed of about 15 different subunits; different subcomplexes with different compositions have been identified which probably have different functions.

It localises to the cellular thylakoid membrane. The enzyme catalyses a plastoquinone + NADH + (n+1) H(+)(in) = a plastoquinol + NAD(+) + n H(+)(out). It catalyses the reaction a plastoquinone + NADPH + (n+1) H(+)(in) = a plastoquinol + NADP(+) + n H(+)(out). Functionally, NDH-1 shuttles electrons from an unknown electron donor, via FMN and iron-sulfur (Fe-S) centers, to quinones in the respiratory and/or the photosynthetic chain. The immediate electron acceptor for the enzyme in this species is believed to be plastoquinone. Couples the redox reaction to proton translocation, and thus conserves the redox energy in a proton gradient. Cyanobacterial NDH-1 also plays a role in inorganic carbon-concentration. This Synechococcus sp. (strain CC9311) protein is NAD(P)H-quinone oxidoreductase subunit 2.